The primary structure comprises 340 residues: Ferrochelatase (340 aa).

Residues histidine 189 and glutamate 292 each contribute to the Fe cation site.

It belongs to the ferrochelatase family.

It localises to the cytoplasm. The enzyme catalyses heme b + 2 H(+) = protoporphyrin IX + Fe(2+). The protein operates within porphyrin-containing compound metabolism; protoheme biosynthesis; protoheme from protoporphyrin-IX: step 1/1. In terms of biological role, catalyzes the ferrous insertion into protoporphyrin IX. The sequence is that of Ferrochelatase from Pseudomonas syringae pv. tomato (strain ATCC BAA-871 / DC3000).